Here is a 414-residue protein sequence, read N- to C-terminus: Serine--tRNA ligase (414 aa).

230-232 (TSE) is a binding site for L-serine. Position 261–263 (261–263 (RQE)) interacts with ATP. Glu284 is an L-serine binding site. 348–351 (EISS) contributes to the ATP binding site. L-serine is bound at residue Ser382.

It belongs to the class-II aminoacyl-tRNA synthetase family. Type-1 seryl-tRNA synthetase subfamily. Homodimer. The tRNA molecule binds across the dimer.

It is found in the cytoplasm. It catalyses the reaction tRNA(Ser) + L-serine + ATP = L-seryl-tRNA(Ser) + AMP + diphosphate + H(+). It carries out the reaction tRNA(Sec) + L-serine + ATP = L-seryl-tRNA(Sec) + AMP + diphosphate + H(+). The protein operates within aminoacyl-tRNA biosynthesis; selenocysteinyl-tRNA(Sec) biosynthesis; L-seryl-tRNA(Sec) from L-serine and tRNA(Sec): step 1/1. Its function is as follows. Catalyzes the attachment of serine to tRNA(Ser). Is also able to aminoacylate tRNA(Sec) with serine, to form the misacylated tRNA L-seryl-tRNA(Sec), which will be further converted into selenocysteinyl-tRNA(Sec). The polypeptide is Serine--tRNA ligase (Campylobacter fetus subsp. fetus (strain 82-40)).